Consider the following 265-residue polypeptide: uncharacterized protein (265 aa).

A helical; Signal-anchor for type II membrane protein membrane pass occupies residues 3–23; sequence KKTWVYIIIAIIIILLLVWYF. Asparagine 37 and asparagine 125 each carry an N-linked (GlcNAc...) asparagine; by host glycan. Positions 37–94 form a coiled coil; the sequence is NQTYNMLQQQISSLNQQILFLKQQISNLHVPAPTSTVNSLRQTVSDINQQVSTINNQI. A coiled-coil region spans residues 158–257; it reads NVADNELNVL…KNSLGSAVRN (100 aa).

The protein localises to the host membrane. It localises to the virion. This is an uncharacterized protein from Acanthamoeba polyphaga (Amoeba).